The following is a 61-amino-acid chain: Small ribosomal subunit protein uS14 (61 aa).

C24, C27, C40, and C43 together coordinate Zn(2+).

Belongs to the universal ribosomal protein uS14 family. Zinc-binding uS14 subfamily. In terms of assembly, part of the 30S ribosomal subunit. Contacts proteins S3 and S10. Requires Zn(2+) as cofactor.

In terms of biological role, binds 16S rRNA, required for the assembly of 30S particles and may also be responsible for determining the conformation of the 16S rRNA at the A site. The sequence is that of Small ribosomal subunit protein uS14 from Geobacillus thermodenitrificans (strain NG80-2).